The sequence spans 337 residues: Inositol 2-dehydrogenase 1 (337 aa).

Belongs to the Gfo/Idh/MocA family. Homotetramer.

It catalyses the reaction myo-inositol + NAD(+) = scyllo-inosose + NADH + H(+). Its function is as follows. Involved in the oxidation of myo-inositol (MI) to 2-keto-myo-inositol (2KMI or 2-inosose). In Paenarthrobacter aurescens (strain TC1), this protein is Inositol 2-dehydrogenase 1.